The chain runs to 231 residues: Homeobox protein engrailed-1a (231 aa).

Disordered stretches follow at residues Met1 to Asn29, Gly43 to Gln105, and Asp121 to Thr148. Positions Gly43 to Gly56 are enriched in basic and acidic residues. Positions Asp68–Lys102 are enriched in low complexity. The segment at residues Asp143–Ser202 is a DNA-binding region (homeobox).

The protein belongs to the engrailed homeobox family.

The protein resides in the nucleus. The chain is Homeobox protein engrailed-1a (eng1a) from Danio rerio (Zebrafish).